Here is a 186-residue protein sequence, read N- to C-terminus: ATP synthase subunit delta (186 aa).

Belongs to the ATPase delta chain family. In terms of assembly, F-type ATPases have 2 components, F(1) - the catalytic core - and F(0) - the membrane proton channel. F(1) has five subunits: alpha(3), beta(3), gamma(1), delta(1), epsilon(1). CF(0) has four main subunits: a(1), b(1), b'(1) and c(10-14). The alpha and beta chains form an alternating ring which encloses part of the gamma chain. F(1) is attached to F(0) by a central stalk formed by the gamma and epsilon chains, while a peripheral stalk is formed by the delta, b and b' chains.

It localises to the cell inner membrane. Functionally, f(1)F(0) ATP synthase produces ATP from ADP in the presence of a proton or sodium gradient. F-type ATPases consist of two structural domains, F(1) containing the extramembraneous catalytic core and F(0) containing the membrane proton channel, linked together by a central stalk and a peripheral stalk. During catalysis, ATP synthesis in the catalytic domain of F(1) is coupled via a rotary mechanism of the central stalk subunits to proton translocation. In terms of biological role, this protein is part of the stalk that links CF(0) to CF(1). It either transmits conformational changes from CF(0) to CF(1) or is implicated in proton conduction. This chain is ATP synthase subunit delta, found in Jannaschia sp. (strain CCS1).